A 105-amino-acid chain; its full sequence is Cyclotide vibi-E (105 aa).

Positions 1–9 are cleaved as a signal peptide; the sequence is AAFALPALA. A propeptide spanning residues 10-69 is cleaved from the precursor; sequence SSFEKDVISFRAIQAVLEKRGLSKLEDDPVLSALAHTKTIISNPVIEEALLNGANLKAGN. The cyclopeptide (Gly-Asn) cross-link spans 70 to 99; sequence GIPCAESCVWIPCTVTALIGCGCSNKVCYN. Disulfide bonds link Cys-73–Cys-90, Cys-77–Cys-92, and Cys-82–Cys-97. Positions 100 to 105 are excised as a propeptide; sequence SLQTKY.

In terms of processing, this is a cyclic peptide.

Its function is as follows. Probably participates in a plant defense mechanism. Has cytotoxic activity, active against a human lymphoma cell line with an IC(50) of 3.2 uM. The protein is Cyclotide vibi-E of Viola biflora (Yellow wood violet).